Reading from the N-terminus, the 75-residue chain is Small, acid-soluble spore protein Tlp (75 aa).

It belongs to the Tlp family.

Its subcellular location is the spore core. This chain is Small, acid-soluble spore protein Tlp, found in Geobacillus thermodenitrificans (strain NG80-2).